The sequence spans 367 residues: tRNA (guanine(26)-N(2))-dimethyltransferase (367 aa).

One can recognise a Trm1 methyltransferase domain in the interval 1-365 (MRVSEGRVTV…ADVVEIREAT (365 aa)). S-adenosyl-L-methionine is bound by residues Arg-34, Arg-64, Asp-79, Asp-105, and Ala-106. Zn(2+) contacts are provided by Cys-234, Cys-237, Cys-254, and Cys-257.

Belongs to the class I-like SAM-binding methyltransferase superfamily. Trm1 family.

It carries out the reaction guanosine(26) in tRNA + 2 S-adenosyl-L-methionine = N(2)-dimethylguanosine(26) in tRNA + 2 S-adenosyl-L-homocysteine + 2 H(+). In terms of biological role, dimethylates a single guanine residue at position 26 of a number of tRNAs using S-adenosyl-L-methionine as donor of the methyl groups. In Haloarcula marismortui (strain ATCC 43049 / DSM 3752 / JCM 8966 / VKM B-1809) (Halobacterium marismortui), this protein is tRNA (guanine(26)-N(2))-dimethyltransferase.